Reading from the N-terminus, the 131-residue chain is Small ribosomal subunit protein bS18 (131 aa).

Residues 1–10 are compositionally biased toward polar residues; it reads MSNGTDSKTA. Residues 1–60 form a disordered region; that stretch reads MSNGTDSKTASAPPARSGGGFGGGGSRGGDRGDRGDRGGDRGDRGGGLGGDDDKRGGGRG. Residues 17-27 are compositionally biased toward gly residues; sequence SGGGFGGGGSR. Basic and acidic residues predominate over residues 28-44; sequence GGDRGDRGDRGGDRGDR.

It belongs to the bacterial ribosomal protein bS18 family. As to quaternary structure, part of the 30S ribosomal subunit. Forms a tight heterodimer with protein bS6.

Binds as a heterodimer with protein bS6 to the central domain of the 16S rRNA, where it helps stabilize the platform of the 30S subunit. The polypeptide is Small ribosomal subunit protein bS18 (Myxococcus xanthus (strain DK1622)).